Consider the following 154-residue polypeptide: Crossover junction endodeoxyribonuclease RuvC (154 aa).

Active-site residues include Asp-7, Glu-66, and Asp-139. Residues Asp-7, Glu-66, and Asp-139 each coordinate Mg(2+).

This sequence belongs to the RuvC family. As to quaternary structure, homodimer which binds Holliday junction (HJ) DNA. The HJ becomes 2-fold symmetrical on binding to RuvC with unstacked arms; it has a different conformation from HJ DNA in complex with RuvA. In the full resolvosome a probable DNA-RuvA(4)-RuvB(12)-RuvC(2) complex forms which resolves the HJ. Requires Mg(2+) as cofactor.

The protein localises to the cytoplasm. It carries out the reaction Endonucleolytic cleavage at a junction such as a reciprocal single-stranded crossover between two homologous DNA duplexes (Holliday junction).. Its function is as follows. The RuvA-RuvB-RuvC complex processes Holliday junction (HJ) DNA during genetic recombination and DNA repair. Endonuclease that resolves HJ intermediates. Cleaves cruciform DNA by making single-stranded nicks across the HJ at symmetrical positions within the homologous arms, yielding a 5'-phosphate and a 3'-hydroxyl group; requires a central core of homology in the junction. The consensus cleavage sequence is 5'-(A/T)TT(C/G)-3'. Cleavage occurs on the 3'-side of the TT dinucleotide at the point of strand exchange. HJ branch migration catalyzed by RuvA-RuvB allows RuvC to scan DNA until it finds its consensus sequence, where it cleaves and resolves the cruciform DNA. This is Crossover junction endodeoxyribonuclease RuvC from Aliarcobacter butzleri (strain RM4018) (Arcobacter butzleri).